Here is a 207-residue protein sequence, read N- to C-terminus: Guanylate kinase (207 aa).

Residues 4-184 (GTLYIVSAPS…ALTDLKTIIR (181 aa)) form the Guanylate kinase-like domain. Residue 11–18 (APSGAGKS) participates in ATP binding.

The protein belongs to the guanylate kinase family.

It localises to the cytoplasm. It carries out the reaction GMP + ATP = GDP + ADP. Functionally, essential for recycling GMP and indirectly, cGMP. The chain is Guanylate kinase from Escherichia coli O157:H7.